The following is a 261-amino-acid chain: Chanoclavine-I dehydrogenase easD (261 aa).

An N-terminal signal peptide occupies residues 1 to 20; that stretch reads MPSMTSKVFAITGGASGIGA. Ile-18 is an NADP(+) binding site. A glycan (N-linked (GlcNAc...) asparagine) is linked at Asn-43. 5 residues coordinate NADP(+): Asp-66, Arg-132, Tyr-166, Lys-170, and Thr-201. The active-site Proton donor is Tyr-166. The Lowers pKa of active site Tyr role is filled by Lys-170.

This sequence belongs to the short-chain dehydrogenases/reductases (SDR) family. Homotetramer.

It carries out the reaction chanoclavine-I + NAD(+) = chanoclavine-I aldehyde + NADH + H(+). It participates in alkaloid biosynthesis; ergot alkaloid biosynthesis. In terms of biological role, chanoclavine-I dehydrogenase; part of the gene cluster that mediates the biosynthesis of fungal ergot alkaloid. DmaW catalyzes the first step of ergot alkaloid biosynthesis by condensing dimethylallyl diphosphate (DMAP) and tryptophan to form 4-dimethylallyl-L-tryptophan. The second step is catalyzed by the methyltransferase easF that methylates 4-dimethylallyl-L-tryptophan in the presence of S-adenosyl-L-methionine, resulting in the formation of 4-dimethylallyl-L-abrine. The catalase easC and the FAD-dependent oxidoreductase easE then transform 4-dimethylallyl-L-abrine to chanoclavine-I which is further oxidized by easD in the presence of NAD(+), resulting in the formation of chanoclavine-I aldehyde. Agroclavine dehydrogenase easG then mediates the conversion of chanoclavine-I aldehyde to agroclavine via a non-enzymatic adduct reaction: the substrate is an iminium intermediate that is formed spontaneously from chanoclavine-I aldehyde in the presence of glutathione. The presence of easA is not required to complete this reaction. Further conversion of agroclavine to paspalic acid is a two-step process involving oxidation of agroclavine to elymoclavine and of elymoclavine to paspalic acid, the second step being performed by the elymoclavine oxidase cloA. Paspalic acid is then further converted to D-lysergic acid. Ergopeptines are assembled from D-lysergic acid and three different amino acids by the D-lysergyl-peptide-synthetases composed each of a monomudular and a trimodular nonribosomal peptide synthetase subunit. LpsB and lpsC encode the monomodular subunits responsible for D-lysergic acid activation and incorporation into the ergopeptine backbone. LpsA1 and A2 subunits encode the trimodular nonribosomal peptide synthetase assembling the tripeptide portion of ergopeptines. LpsA1 is responsible for formation of the major ergopeptine, ergotamine, and lpsA2 for alpha-ergocryptine, the minor ergopeptine of the total alkaloid mixture elaborated by C.purpurea. D-lysergyl-tripeptides are assembled by the nonribosomal peptide synthetases and released as N-(D-lysergyl-aminoacyl)-lactams. Cyclolization of the D-lysergyl-tripeptides is performed by the Fe(2+)/2-ketoglutarate-dependent dioxygenase easH which introduces a hydroxyl group into N-(D-lysergyl-aminoacyl)-lactam at alpha-C of the aminoacyl residue followed by spontaneous condensation with the terminal lactam carbonyl group. The protein is Chanoclavine-I dehydrogenase easD of Claviceps purpurea (strain 20.1) (Ergot fungus).